Consider the following 393-residue polypeptide: Digeranylgeranylglycerophospholipid reductase (393 aa).

Residues alanine 13, aspartate 32, cysteine 43, alanine 44, glycine 46, arginine 95, valine 119, aspartate 274, and glycine 286 each contribute to the FAD site. Lysine 327 and glycine 363 together coordinate a 2,3-bis-O-(geranylgeranyl)-sn-glycerol 1-phospholipid.

It belongs to the geranylgeranyl reductase family. DGGGPL reductase subfamily. Requires FAD as cofactor.

It catalyses the reaction a 2,3-bis-O-phytanyl-sn-glycerol 1-phospholipid + 8 A = a 2,3-bis-O-(geranylgeranyl)-sn-glycerol 1-phospholipid + 8 AH2. It carries out the reaction 2,3-bis-O-(phytanyl)-sn-glycerol 1-phosphate + 8 A = 2,3-bis-O-(geranylgeranyl)-sn-glycerol 1-phosphate + 8 AH2. The enzyme catalyses CDP-2,3-bis-O-(geranylgeranyl)-sn-glycerol + 8 AH2 = CDP-2,3-bis-O-(phytanyl)-sn-glycerol + 8 A. The catalysed reaction is archaetidylserine + 8 AH2 = 2,3-bis-O-phytanyl-sn-glycero-3-phospho-L-serine + 8 A. It participates in membrane lipid metabolism; glycerophospholipid metabolism. Functionally, is involved in the reduction of 2,3-digeranylgeranylglycerophospholipids (unsaturated archaeols) into 2,3-diphytanylglycerophospholipids (saturated archaeols) in the biosynthesis of archaeal membrane lipids. Catalyzes the formation of archaetidic acid (2,3-di-O-phytanyl-sn-glyceryl phosphate) from 2,3-di-O-geranylgeranylglyceryl phosphate (DGGGP) via the hydrogenation of each double bond of the isoprenoid chains. Is also probably able to reduce double bonds of geranyl groups in CDP-2,3-bis-O-(geranylgeranyl)-sn-glycerol and archaetidylserine, thus acting at various stages in the biosynthesis of archaeal membrane lipids. In Pyrococcus furiosus (strain ATCC 43587 / DSM 3638 / JCM 8422 / Vc1), this protein is Digeranylgeranylglycerophospholipid reductase.